The chain runs to 485 residues: Glutamyl-tRNA(Gln) amidotransferase subunit A (485 aa).

Active-site charge relay system residues include Lys76 and Ser155. Ser179 serves as the catalytic Acyl-ester intermediate.

It belongs to the amidase family. GatA subfamily. Heterotrimer of A, B and C subunits.

The enzyme catalyses L-glutamyl-tRNA(Gln) + L-glutamine + ATP + H2O = L-glutaminyl-tRNA(Gln) + L-glutamate + ADP + phosphate + H(+). Its function is as follows. Allows the formation of correctly charged Gln-tRNA(Gln) through the transamidation of misacylated Glu-tRNA(Gln) in organisms which lack glutaminyl-tRNA synthetase. The reaction takes place in the presence of glutamine and ATP through an activated gamma-phospho-Glu-tRNA(Gln). The polypeptide is Glutamyl-tRNA(Gln) amidotransferase subunit A (Marinobacter nauticus (strain ATCC 700491 / DSM 11845 / VT8) (Marinobacter aquaeolei)).